A 325-amino-acid chain; its full sequence is Secreted RxLR effector protein RXLR-C07 (325 aa).

Positions Met1 to Ala19 are cleaved as a signal peptide. TPR repeat units lie at residues Arg37–Arg75, Ala92–Ile125, Gly134–Gly167, Ala218–Arg251, and Ala260–Ile293. The RxLR-dEER signature appears at Arg37–Arg75.

Belongs to the RxLR effector family.

The protein resides in the secreted. It localises to the host cytoplasm. Its subcellular location is the host nucleus. It is found in the host nucleolus. Functionally, secreted effector that suppresses pattern-triggered immunity (PTI) in plant host. The protein is Secreted RxLR effector protein RXLR-C07 of Plasmopara halstedii (Downy mildew of sunflower).